Consider the following 295-residue polypeptide: ATP synthase gamma chain (295 aa).

Belongs to the ATPase gamma chain family. As to quaternary structure, F-type ATPases have 2 components, CF(1) - the catalytic core - and CF(0) - the membrane proton channel. CF(1) has five subunits: alpha(3), beta(3), gamma(1), delta(1), epsilon(1). CF(0) has three main subunits: a, b and c.

Its subcellular location is the cell membrane. Its function is as follows. Produces ATP from ADP in the presence of a proton gradient across the membrane. The gamma chain is believed to be important in regulating ATPase activity and the flow of protons through the CF(0) complex. This Herpetosiphon aurantiacus (strain ATCC 23779 / DSM 785 / 114-95) protein is ATP synthase gamma chain.